A 278-amino-acid chain; its full sequence is Pantothenate synthetase (278 aa).

27 to 34 (MGYLHEGH) contributes to the ATP binding site. The active-site Proton donor is His34. Position 58 (Gln58) interacts with (R)-pantoate. Gln58 serves as a coordination point for beta-alanine. Residue 144 to 147 (GQKD) coordinates ATP. Position 150 (Gln150) interacts with (R)-pantoate. Residues Val173 and 181-184 (MSSR) each bind ATP.

This sequence belongs to the pantothenate synthetase family. In terms of assembly, homodimer.

The protein resides in the cytoplasm. The catalysed reaction is (R)-pantoate + beta-alanine + ATP = (R)-pantothenate + AMP + diphosphate + H(+). The protein operates within cofactor biosynthesis; (R)-pantothenate biosynthesis; (R)-pantothenate from (R)-pantoate and beta-alanine: step 1/1. In terms of biological role, catalyzes the condensation of pantoate with beta-alanine in an ATP-dependent reaction via a pantoyl-adenylate intermediate. The sequence is that of Pantothenate synthetase from Roseiflexus sp. (strain RS-1).